The following is a 179-amino-acid chain: Acireductone dioxygenase (179 aa).

Fe(2+) is bound by residues His-100, His-102, Glu-106, and His-145. 4 residues coordinate Ni(2+): His-100, His-102, Glu-106, and His-145.

The protein belongs to the acireductone dioxygenase (ARD) family. In terms of assembly, monomer. The cofactor is Fe(2+). Ni(2+) serves as cofactor.

The catalysed reaction is 1,2-dihydroxy-5-(methylsulfanyl)pent-1-en-3-one + O2 = 3-(methylsulfanyl)propanoate + CO + formate + 2 H(+). It carries out the reaction 1,2-dihydroxy-5-(methylsulfanyl)pent-1-en-3-one + O2 = 4-methylsulfanyl-2-oxobutanoate + formate + 2 H(+). The protein operates within amino-acid biosynthesis; L-methionine biosynthesis via salvage pathway; L-methionine from S-methyl-5-thio-alpha-D-ribose 1-phosphate: step 5/6. Its function is as follows. Catalyzes 2 different reactions between oxygen and the acireductone 1,2-dihydroxy-3-keto-5-methylthiopentene (DHK-MTPene) depending upon the metal bound in the active site. Fe-containing acireductone dioxygenase (Fe-ARD) produces formate and 2-keto-4-methylthiobutyrate (KMTB), the alpha-ketoacid precursor of methionine in the methionine recycle pathway. Ni-containing acireductone dioxygenase (Ni-ARD) produces methylthiopropionate, carbon monoxide and formate, and does not lie on the methionine recycle pathway. This Bacillus licheniformis (strain ATCC 14580 / DSM 13 / JCM 2505 / CCUG 7422 / NBRC 12200 / NCIMB 9375 / NCTC 10341 / NRRL NRS-1264 / Gibson 46) protein is Acireductone dioxygenase.